We begin with the raw amino-acid sequence, 36 residues long: Esculentin-2R (36 aa).

Residues cysteine 30 and cysteine 36 are joined by a disulfide bond.

In terms of tissue distribution, expressed by the skin glands.

It is found in the secreted. Its function is as follows. Antimicrobial peptide. In Pelophylax ridibundus (Marsh frog), this protein is Esculentin-2R.